Consider the following 73-residue polypeptide: Large ribosomal subunit protein eL20 (73 aa).

This sequence belongs to the eukaryotic ribosomal protein eL20 family. Part of the 50S ribosomal subunit. Binds 23S rRNA.

This chain is Large ribosomal subunit protein eL20, found in Methanococcus aeolicus (strain ATCC BAA-1280 / DSM 17508 / OCM 812 / Nankai-3).